The sequence spans 254 residues: MLPFGLVAALLLAAGPRPSLGDEAIHCPPCSEEKLARCRPPVGCEELVREPGCGCCATCALGLGMPCGVYTPRCGSGMRCYPPRGVEKPLRTLMHGQGVCTELSEIEAIQESLQTSDKDESEHPNNSFNPCSAHDHRCLQKHMAKIRDRSKMKIVGTPREEPRPVPQGSCQSELHRALERLAASQSRTHEDLFIIPIPNCDRNGNFHPKQCHPALDGQRGKCWCVDRKTGVKLPGGLEPKGELDCHQLADSFQE.

Residues 1–21 (MLPFGLVAALLLAAGPRPSLG) form the signal peptide. The region spanning 23 to 103 (EAIHCPPCSE…MHGQGVCTEL (81 aa)) is the IGFBP N-terminal domain. Disulfide bonds link cysteine 27–cysteine 53, cysteine 30–cysteine 55, cysteine 38–cysteine 56, cysteine 44–cysteine 59, cysteine 67–cysteine 80, and cysteine 74–cysteine 100. The N-linked (GlcNAc...) asparagine glycan is linked to asparagine 125. Disulfide bonds link cysteine 131–cysteine 138, cysteine 170–cysteine 200, cysteine 211–cysteine 222, and cysteine 224–cysteine 245. A Thyroglobulin type-1 domain is found at 167 to 245 (QGSCQSELHR…GLEPKGELDC (79 aa)). At serine 251 the chain carries Phosphoserine.

As to quaternary structure, binds IGF2 more than IGF1.

Its subcellular location is the secreted. IGF-binding proteins prolong the half-life of the IGFs and have been shown to either inhibit or stimulate the growth promoting effects of the IGFs on cell culture. They alter the interaction of IGFs with their cell surface receptors. The sequence is that of Insulin-like growth factor-binding protein 4 (Igfbp4) from Mus musculus (Mouse).